The following is a 444-amino-acid chain: Glutamate--tRNA ligase (444 aa).

The 'HIGH' region motif lies at 12–22; the sequence is PSPTGFLHVGG. The 'KMSKS' region motif lies at 213–217; that stretch reads KMSKR. Residue lysine 216 coordinates ATP.

Belongs to the class-I aminoacyl-tRNA synthetase family. Glutamate--tRNA ligase type 1 subfamily. In terms of assembly, monomer.

The protein localises to the cytoplasm. The enzyme catalyses tRNA(Glu) + L-glutamate + ATP = L-glutamyl-tRNA(Glu) + AMP + diphosphate. In terms of biological role, catalyzes the attachment of glutamate to tRNA(Glu) in a two-step reaction: glutamate is first activated by ATP to form Glu-AMP and then transferred to the acceptor end of tRNA(Glu). This Methylacidiphilum infernorum (isolate V4) (Methylokorus infernorum (strain V4)) protein is Glutamate--tRNA ligase.